Reading from the N-terminus, the 862-residue chain is Short transient receptor potential channel 7 (862 aa).

Residues 1-21 (MLGSNTFKNMQRRHTTLREKG) are disordered. Residues 1 to 351 (MLGSNTFKNM…GLRQQSIAVK (351 aa)) lie on the Cytoplasmic side of the membrane. Over residues 10–21 (MQRRHTTLREKG) the composition is skewed to basic residues. At T15 the chain carries Phosphothreonine; by PKG/PRKG1. ANK repeat units follow at residues 42–71 (PEEERFLDSAEYGNIPVVRKMLEESKTLNF), 77–106 (MGQNALQLAVGNEHLEVTELLLKKENLARV), 108–134 (DALLLAISKGYVRIVEAILSHPAFAQG), and 163–192 (HDITPIILAAHCQEYEIVHILLLKGARIER). Residues 352–372 (FLAVFGVSIGLPFLAIAYWIA) form a helical membrane-spanning segment. The Extracellular portion of the chain corresponds to 373–383 (PCSKLGQTLRS). Residues 384-404 (PFMKFVAHAVSFTIFLGLLVV) form a helical membrane-spanning segment. The Cytoplasmic portion of the chain corresponds to 405-465 (NASDRFEGVK…KEIWEEGPRE (61 aa)). A helical membrane pass occupies residues 466-486 (YVLHLWNLLDFGMLSIFVASF). Topologically, residues 487 to 537 (TARFMAFLKASEAQLYVDQYVQDVTLHNVSLPPEVAYFTYARDKWWPSDPQ) are extracellular. The N-linked (GlcNAc...) asparagine glycan is linked to N514. Residues 538-558 (IISEGLYAIAVVLSFSRIAYI) traverse the membrane as a helical segment. Topologically, residues 559-581 (LPANESFGPLQISLGRTVKDIFK) are cytoplasmic. The helical transmembrane segment at 582–602 (FMVIFIMVFVAFMIGMFNLYS) threads the bilayer. The Extracellular portion of the chain corresponds to 603-651 (YYRGAKYNPAFTTVEESFKTLFWSIFGLSEVISVVLKYDHKFIENIGYV). The chain crosses the membrane as a helical span at residues 652-672 (LYGVYNVTMVVVLLNMLIAMI). Residues 673 to 862 (NNSYQEIEED…HLRVNQGKDI (190 aa)) are Cytoplasmic-facing.

Belongs to the transient receptor (TC 1.A.4) family. STrpC subfamily. TRPC7 sub-subfamily. Interacts with MX1 and RNF24. Interacts (via ANK-repeat domains) with PRKG1. In terms of processing, phosphorylation by PRKG1 at Thr-15 negatively regulates TRPC7 activity.

Its subcellular location is the cell membrane. The protein resides in the nucleus envelope. It carries out the reaction Ca(2+)(in) = Ca(2+)(out). Its function is as follows. Forms a receptor-activated non-selective calcium permeant cation channel. Probably is operated by a phosphatidylinositol second messenger system activated by receptor tyrosine kinases or G-protein coupled receptors. Activated by diacylglycerol (DAG). May also be activated by intracellular calcium store depletion. The polypeptide is Short transient receptor potential channel 7 (Trpc7) (Mus musculus (Mouse)).